Reading from the N-terminus, the 629-residue chain is tRNA uridine 5-carboxymethylaminomethyl modification enzyme MnmG (629 aa).

FAD contacts are provided by residues 13-18 (GGGHAG), Val125, and Ser180. 273–287 (GPRYCPSIEDKVMRF) contributes to the NAD(+) binding site. FAD is bound at residue Gln370.

The protein belongs to the MnmG family. As to quaternary structure, homodimer. Heterotetramer of two MnmE and two MnmG subunits. The cofactor is FAD.

The protein resides in the cytoplasm. Its function is as follows. NAD-binding protein involved in the addition of a carboxymethylaminomethyl (cmnm) group at the wobble position (U34) of certain tRNAs, forming tRNA-cmnm(5)s(2)U34. The chain is tRNA uridine 5-carboxymethylaminomethyl modification enzyme MnmG from Enterobacter sp. (strain 638).